The primary structure comprises 152 residues: Nascent polypeptide-associated complex subunit beta (152 aa).

2 disordered regions span residues 19 to 39 (IGKGTPRRKVKRAPARSAGDD) and 125 to 152 (NMQKNEKDAEEDDIPDLVAGENFESKVE). The span at 23–32 (TPRRKVKRAP) shows a compositional bias: basic residues. Residues 36 to 101 (AGDDKKLQAT…GEDKELTELV (66 aa)) form the NAC-A/B domain.

Belongs to the NAC-beta family. In terms of assembly, part of the nascent polypeptide-associated complex (NAC), consisting of npc-1/egd2 and npc-2/egd1. NAC associates with ribosomes via npc-2/egd1.

It localises to the cytoplasm. It is found in the nucleus. In terms of biological role, component of the nascent polypeptide-associated complex (NAC), a dynamic component of the ribosomal exit tunnel, protecting the emerging polypeptides from interaction with other cytoplasmic proteins to ensure appropriate nascent protein targeting. The NAC complex also promotes mitochondrial protein import by enhancing productive ribosome interactions with the outer mitochondrial membrane and blocks the inappropriate interaction of ribosomes translating non-secretory nascent polypeptides with translocation sites in the membrane of the endoplasmic reticulum. Npc-2/egd1 may act as a transcription factor that exert a negative effect on the expression of several genes that are transcribed by RNA polymerase II. This chain is Nascent polypeptide-associated complex subunit beta (npc-2), found in Neurospora crassa (strain ATCC 24698 / 74-OR23-1A / CBS 708.71 / DSM 1257 / FGSC 987).